Consider the following 369-residue polypeptide: tRNA-specific 2-thiouridylase MnmA (369 aa).

ATP-binding positions include 12–19 and Met38; that span reads GMSGGVDS. The segment at 98–100 is interaction with target base in tRNA; that stretch reads NPD. Cys103 (nucleophile) is an active-site residue. Cys103 and Cys200 are disulfide-bonded. Position 128 (Gly128) interacts with ATP. The segment at 150 to 152 is interaction with tRNA; that stretch reads KDQ. Residue Cys200 is the Cysteine persulfide intermediate of the active site. The interval 312–313 is interaction with tRNA; the sequence is RY.

It belongs to the MnmA/TRMU family. Interacts with TusE.

The protein localises to the cytoplasm. It carries out the reaction S-sulfanyl-L-cysteinyl-[protein] + uridine(34) in tRNA + AH2 + ATP = 2-thiouridine(34) in tRNA + L-cysteinyl-[protein] + A + AMP + diphosphate + H(+). Its function is as follows. Catalyzes the 2-thiolation of uridine at the wobble position (U34) of tRNA(Lys), tRNA(Glu) and tRNA(Gln), leading to the formation of s(2)U34, the first step of tRNA-mnm(5)s(2)U34 synthesis. Sulfur is provided by IscS, via a sulfur-relay system. Binds ATP and its substrate tRNAs. The polypeptide is tRNA-specific 2-thiouridylase MnmA (Sodalis glossinidius (strain morsitans)).